Here is a 105-residue protein sequence, read N- to C-terminus: MAIRYPMAVGLNKGHKVTKNVSKPRHCRRRGRLTKHTKFVRDMIREVCGFAPYERRAMELLKVSKDKRALKFIKKRVGTHIRAKRKREELSNVLAAMRKAAAKKD.

This sequence belongs to the eukaryotic ribosomal protein eL36 family. In terms of assembly, component of the large ribosomal subunit.

It is found in the cytoplasm. The protein resides in the cytosol. Its function is as follows. Component of the large ribosomal subunit. The ribosome is a large ribonucleoprotein complex responsible for the synthesis of proteins in the cell. This Hydrophis hardwickii (Hardwick's spine-bellied seasnake) protein is Large ribosomal subunit protein eL36 (RPL36).